A 333-amino-acid polypeptide reads, in one-letter code: Anthranilate phosphoribosyltransferase (333 aa).

5-phospho-alpha-D-ribose 1-diphosphate contacts are provided by residues Gly81, 84–85, Thr89, 91–94, 109–117, and Ala121; these read GD, NIST, and KHGNRSVSS. Gly81 contacts anthranilate. Position 93 (Ser93) interacts with Mg(2+). Asn112 is a binding site for anthranilate. Arg167 is a binding site for anthranilate. Mg(2+) contacts are provided by Asp225 and Glu226.

This sequence belongs to the anthranilate phosphoribosyltransferase family. As to quaternary structure, homodimer. It depends on Mg(2+) as a cofactor.

It catalyses the reaction N-(5-phospho-beta-D-ribosyl)anthranilate + diphosphate = 5-phospho-alpha-D-ribose 1-diphosphate + anthranilate. The protein operates within amino-acid biosynthesis; L-tryptophan biosynthesis; L-tryptophan from chorismate: step 2/5. Catalyzes the transfer of the phosphoribosyl group of 5-phosphorylribose-1-pyrophosphate (PRPP) to anthranilate to yield N-(5'-phosphoribosyl)-anthranilate (PRA). This Haemophilus influenzae (strain 86-028NP) protein is Anthranilate phosphoribosyltransferase.